The primary structure comprises 363 residues: DNA replication and repair protein RecF (363 aa).

Gly-30–Thr-37 provides a ligand contact to ATP.

This sequence belongs to the RecF family.

It localises to the cytoplasm. Its function is as follows. The RecF protein is involved in DNA metabolism; it is required for DNA replication and normal SOS inducibility. RecF binds preferentially to single-stranded, linear DNA. It also seems to bind ATP. In Chlorobium limicola (strain DSM 245 / NBRC 103803 / 6330), this protein is DNA replication and repair protein RecF.